The sequence spans 272 residues: HMP-PP phosphatase (272 aa).

Residue aspartate 8 is the Nucleophile of the active site. Mg(2+)-binding residues include aspartate 8, aspartate 10, and aspartate 212.

It belongs to the HAD-like hydrolase superfamily. Cof family. Mg(2+) serves as cofactor.

It catalyses the reaction 4-amino-2-methyl-5-(diphosphooxymethyl)pyrimidine + H2O = 4-amino-2-methyl-5-(phosphooxymethyl)pyrimidine + phosphate + H(+). Its function is as follows. Catalyzes the hydrolysis of 4-amino-2-methyl-5-hydroxymethylpyrimidine pyrophosphate (HMP-PP) to 4-amino-2-methyl-5-hydroxymethylpyrimidine phosphate (HMP-P). The sequence is that of HMP-PP phosphatase from Citrobacter koseri (strain ATCC BAA-895 / CDC 4225-83 / SGSC4696).